Here is a 450-residue protein sequence, read N- to C-terminus: Phosphoglucosamine mutase (450 aa).

S104 acts as the Phosphoserine intermediate in catalysis. Residues S104, D241, D243, and D245 each contribute to the Mg(2+) site. Position 104 is a phosphoserine (S104).

Belongs to the phosphohexose mutase family. Mg(2+) serves as cofactor. Post-translationally, activated by phosphorylation.

It carries out the reaction alpha-D-glucosamine 1-phosphate = D-glucosamine 6-phosphate. In terms of biological role, catalyzes the conversion of glucosamine-6-phosphate to glucosamine-1-phosphate. This Renibacterium salmoninarum (strain ATCC 33209 / DSM 20767 / JCM 11484 / NBRC 15589 / NCIMB 2235) protein is Phosphoglucosamine mutase.